We begin with the raw amino-acid sequence, 315 residues long: Cysteine proteinase 1 (315 aa).

Residues Met1–Gly13 form the signal peptide. A propeptide spans Ile14–Gln93 (activation peptide). Intrachain disulfides connect Cys115/Cys161 and Cys152/Cys193. Cys118 is a catalytic residue. Catalysis depends on residues His259 and Asn279.

Belongs to the peptidase C1 family.

It is found in the lysosome. Inhibited by cysteine protease inhibitors ICP1 and ICP2. Cysteine protease which degrades matrix proteins such as collagen, laminin and fibronectin and thus is involved in the destruction of human tissue. Can abolish adhesion. May play an important role in pathogenicity. The sequence is that of Cysteine proteinase 1 from Entamoeba histolytica (strain ATCC 30459 / HM-1:IMSS / ABRM).